Here is a 149-residue protein sequence, read N- to C-terminus: MERTFLMIKPDAIQRNLVGEIISRIERKGLKLVGAKLMTVPQALAEEHYSEHTDKPFYGKLISFITSAPVFAMVVEGEDAVDVSRHIIGKTNPSEATPGSIRGDLGLTVGRNVIHGSDSVESAQREINLWFKEEELSSYEAPRDTWLYE.

ATP contacts are provided by lysine 9, phenylalanine 57, arginine 85, threonine 91, arginine 102, and asparagine 112. Histidine 115 acts as the Pros-phosphohistidine intermediate in catalysis.

It belongs to the NDK family. Homotetramer. It depends on Mg(2+) as a cofactor.

It is found in the cytoplasm. The catalysed reaction is a 2'-deoxyribonucleoside 5'-diphosphate + ATP = a 2'-deoxyribonucleoside 5'-triphosphate + ADP. It carries out the reaction a ribonucleoside 5'-diphosphate + ATP = a ribonucleoside 5'-triphosphate + ADP. Major role in the synthesis of nucleoside triphosphates other than ATP. The ATP gamma phosphate is transferred to the NDP beta phosphate via a ping-pong mechanism, using a phosphorylated active-site intermediate. The protein is Nucleoside diphosphate kinase of Staphylococcus haemolyticus (strain JCSC1435).